We begin with the raw amino-acid sequence, 988 residues long: MKIARGRELLTPEQRQAFMQIPEDEWILGTYFTFSKRDLEIVNKRRREENRLGFAVQLAVLRYPGWPYTHIKSIPDSVIQYISKQIGVSPSSLDHYPQRENTLWDHLKEIRSEYDFVTFTLSEYRMTFKYLHQLALENGDAIHLLHECIDFLRKNKIILPAITTLERMVWEARAMAEKKLFNTVSKSLTNEQKEKLEGIITSQHPSESNKTILGWLKEPPGHPSPETFLKIIERLEYIRGMDLETVQISHLHRNRLLQLSRLGSRYEPYAFRDFQENKRYSILTIYLLQLTQELTDKAFEIHDRQILSLLSKGRKAQEEIQKQNGKKLNEKVIHFTNIGQALIKAREEKLDVFKVLESVIEWNTFVSSVEEAQELARPADYDYLDLLQKRFYSLRKYTPTLLRVLEFHSTKANEPLLQAVEIIRGMNESGKRKVPDDSPVDFISKRWKRHLYEDDGTTINRHYYEMAVLTELREHVRAGDVSIVGSRQYRDFEEYLFSEDTWNQSKGNTRLSVSLSFEDYITERTSSFNERLKWLAANSNKLDGVSLEKGKLSLARLEKDVPEEAKKFSASLYQMLPRIKLTDLLMDVAHITGFHEQFTHASNNRKPDKEETIIIMAALLGMGMNIGLSKMAEATPGLTYKQLANVSQWRMYEDAMNKAQAILVNFHHKLQLPFYWGDGTTSSSDGMRMQLGVSSLHADANPHYGTGKGATIYRFTSDQFSSYYTKIIHTNSRDAIHVLDGLLHHETDLNIEEHYTDTAGYTDQIFGLTHLLGFKFAPRIRDLSDSKLFTIDKASEYPKLEAILRGQINTKVIKENYEDVLRLAHSIREGTVSASLIMGKLGSYSRQNSLATALREMGRIEKTIFILNYISDESLRRKIQRGLNKGEAMNGLARAIFFGKQGELRERTIQHQLQRASALNIIINAISIWNTLHLTTAVEYKKRTGSFNEDLLHHMSPLGWEHINLLGEYHFNSEKVVSLNSLRPLKLS.

Belongs to the transposase 7 family.

In terms of biological role, required for transposition of transposon Tn1546. The polypeptide is Transposase for transposon Tn1546 (Enterococcus faecium (Streptococcus faecium)).